We begin with the raw amino-acid sequence, 1272 residues long: Protein diaphanous homolog 1 (1272 aa).

M1 is modified (N-acetylmethionine). Gly residues predominate over residues 1–12 (MEPPGGSLGPGR). The interval 1-84 (MEPPGGSLGP…YGDDPTAQSL (84 aa)) is disordered. Residues S7, S22, and S36 each carry the phosphoserine modification. Over residues 44-65 (LMADELERFTSMRIKKEKEKPN) the composition is skewed to basic and acidic residues. The span at 67–84 (AHRNSSASYGDDPTAQSL) shows a compositional bias: polar residues. The 366-residue stretch at 84 to 449 (LQDVSDEQVL…QIVLHKNGAD (366 aa)) folds into the GBD/FH3 domain. Positions 468-572 (MIDKTKVEKS…ASLSAAAITV (105 aa)) form a coiled coil. Residues 573 to 755 (PPSVPSRAPV…GMPPPPPFGF (183 aa)) are disordered. 3 stretches are compositionally biased toward pro residues: residues 574–589 (PSVP…PPLP), 596–622 (IPPP…PPLP), and 640–658 (SPPP…PPLP). One can recognise an FH1 domain in the interval 583-764 (PPAPPLPGDS…FGVPAAPVLP (182 aa)). Residues 659 to 674 (EGVGIPSPSSLPGGTA) show a composition bias toward low complexity. Residues 675–753 (IPPPPPLPGS…GMGMPPPPPF (79 aa)) show a composition bias toward pro residues. At T768 the chain carries Phosphothreonine. One can recognise an FH2 domain in the interval 769 to 1171 (PKKLYKPEVQ…MRRAKLAKEK (403 aa)). Residues 1039 to 1196 (DELAHVEKAS…IDMNAEGDET (158 aa)) are a coiled coil. K1057 and K1103 each carry N6-acetyllysine. Residue Y1121 is modified to Phosphotyrosine. The DAD domain maps to 1194-1222 (DETGVMDSLLEALQSGAAFRRKRGPRQAN). Phosphoserine is present on residues S1251 and S1254.

It belongs to the formin homology family. Diaphanous subfamily. As to quaternary structure, homodimer. Interacts with the GTP-bound form of RHOA. Interacts with RHOC, PFY1, MAPRE1 and BAIAP2. Interacts with APC; acts as a scaffold protein for MAPRE1 and APC to stabilize microtubules and promote cell migration. Interacts with SCAI. Interacts with DCAF7, via FH2 domain. Interacts with NCDN. Interacts with OSBPL10, OSBPL2, VIM, TUBB and DYN1. Phosphorylation at Thr-768 is stimulated by cAMP and regulates stability, complex formation and mitochondrial movement. As to expression, expressed in brain, heart, placenta, lung, kidney, pancreas, liver, skeletal muscle and cochlea. Expressed in platelets.

The protein resides in the cell membrane. Its subcellular location is the cell projection. It localises to the ruffle membrane. The protein localises to the cytoplasm. It is found in the cytoskeleton. The protein resides in the microtubule organizing center. Its subcellular location is the centrosome. It localises to the spindle. The protein localises to the nucleus. Functionally, actin nucleation and elongation factor required for the assembly of F-actin structures, such as actin cables and stress fibers. Binds to the barbed end of the actin filament and slows down actin polymerization and depolymerization. Required for cytokinesis, and transcriptional activation of the serum response factor. DFR proteins couple Rho and Src tyrosine kinase during signaling and the regulation of actin dynamics. Functions as a scaffold protein for MAPRE1 and APC to stabilize microtubules and promote cell migration. Has neurite outgrowth promoting activity. Acts in a Rho-dependent manner to recruit PFY1 to the membrane. In hear cells, it may play a role in the regulation of actin polymerization in hair cells. The MEMO1-RHOA-DIAPH1 signaling pathway plays an important role in ERBB2-dependent stabilization of microtubules at the cell cortex. It controls the localization of APC and CLASP2 to the cell membrane, via the regulation of GSK3B activity. In turn, membrane-bound APC allows the localization of the MACF1 to the cell membrane, which is required for microtubule capture and stabilization. Plays a role in the regulation of cell morphology and cytoskeletal organization. Required in the control of cell shape. Plays a role in brain development. Also acts as an actin nucleation and elongation factor in the nucleus by promoting nuclear actin polymerization inside the nucleus to drive serum-dependent SRF-MRTFA activity. This chain is Protein diaphanous homolog 1 (DIAPH1), found in Homo sapiens (Human).